We begin with the raw amino-acid sequence, 137 residues long: Large ribosomal subunit protein uL16c (137 aa).

Positions 1–21 (MLSPKRTKFRRHHRGRMKGKA) are disordered.

It belongs to the universal ribosomal protein uL16 family. As to quaternary structure, part of the 50S ribosomal subunit.

The protein resides in the plastid. It is found in the chloroplast. The sequence is that of Large ribosomal subunit protein uL16c from Tupiella akineta (Green alga).